The following is a 245-amino-acid chain: NAD-dependent protein deacylase 1 (245 aa).

In terms of domain architecture, Deacetylase sirtuin-type spans Met1–Ala243. Gly20–Trp39 serves as a coordination point for NAD(+). Substrate-binding residues include Tyr64 and Arg67. NAD(+) is bound at residue Gln98–Asp101. The active-site Proton acceptor is His116. The Zn(2+) site is built by Cys124, Cys127, Cys145, and Cys148. NAD(+) is bound by residues Gly185 to Ser187, Asn211 to Asp213, and Ala229.

Belongs to the sirtuin family. Class III subfamily. The cofactor is Zn(2+).

Its subcellular location is the cytoplasm. It carries out the reaction N(6)-acetyl-L-lysyl-[protein] + NAD(+) + H2O = 2''-O-acetyl-ADP-D-ribose + nicotinamide + L-lysyl-[protein]. It catalyses the reaction N(6)-succinyl-L-lysyl-[protein] + NAD(+) + H2O = 2''-O-succinyl-ADP-D-ribose + nicotinamide + L-lysyl-[protein]. In terms of biological role, NAD-dependent lysine deacetylase and desuccinylase that specifically removes acetyl and succinyl groups on target proteins. Modulates the activities of several proteins which are inactive in their acylated form. Deacetylates the N-terminal lysine residue of Alba, the major archaeal chromatin protein and that, in turn, increases Alba's DNA binding affinity, thereby repressing transcription. This chain is NAD-dependent protein deacylase 1, found in Archaeoglobus fulgidus (strain ATCC 49558 / DSM 4304 / JCM 9628 / NBRC 100126 / VC-16).